Here is a 262-residue protein sequence, read N- to C-terminus: Glutamate racemase (262 aa).

Substrate-binding positions include 5–6 and 37–38; these read DS and YG. The Proton donor/acceptor role is filled by C69. 70 to 71 is a substrate binding site; sequence NT. C181 serves as the catalytic Proton donor/acceptor. Substrate is bound at residue 182 to 183; the sequence is TH.

This sequence belongs to the aspartate/glutamate racemases family.

The catalysed reaction is L-glutamate = D-glutamate. Its pathway is cell wall biogenesis; peptidoglycan biosynthesis. Its function is as follows. Provides the (R)-glutamate required for cell wall biosynthesis. This is Glutamate racemase from Buchnera aphidicola subsp. Acyrthosiphon pisum (strain Tuc7).